The chain runs to 514 residues: Nucleus accumbens-associated protein 1 (514 aa).

One can recognise a BTB domain in the interval 30-94 (CDVSVVVKGH…CYTGRLSMNM (65 aa)). Residue lysine 167 forms a Glycyl lysine isopeptide (Lys-Gly) (interchain with G-Cter in SUMO1); alternate linkage. Lysine 167 participates in a covalent cross-link: Glycyl lysine isopeptide (Lys-Gly) (interchain with G-Cter in SUMO2); alternate. A Glycyl lysine isopeptide (Lys-Gly) (interchain with G-Cter in SUMO2) cross-link involves residue lysine 182. 2 disordered regions span residues 183–205 (RLWDSSQKEAGGSGGNNGSRKMA) and 242–279 (PSMSERTSPGTSSAYTSDSPSSYHNEEDEEEDAGEEGT). Serine 187 carries the phosphoserine modification. Residues 242-251 (PSMSERTSPG) are compositionally biased toward polar residues. Serine 245 carries the post-translational modification Phosphoserine; by PKC. A compositionally biased stretch (low complexity) spans 252–264 (TSSAYTSDSPSSY). Residues 267-279 (EEDEEEDAGEEGT) are compositionally biased toward acidic residues. Residues lysine 304, lysine 438, lysine 466, and lysine 485 each participate in a glycyl lysine isopeptide (Lys-Gly) (interchain with G-Cter in SUMO2) cross-link. The region spanning 360–457 (GTNVYITRAQ…DMCTNARRVV (98 aa)) is the BEN domain. Residues serine 492 and serine 496 each carry the phosphoserine modification.

As to quaternary structure, homooligomer; mediated by the BTB domain. Interacts with HDAC3 and HDAC4. Interacts (via BTB domain) with CUL3, PSMD7 and RCOR1. In terms of tissue distribution, ubiquitously expressed with higher expression in the brain, kidney and liver, and at lower levels in heart, lung and testes.

Its subcellular location is the nucleus. The protein localises to the cytoplasm. Functionally, functions as a transcriptional repressor. Seems to function as a transcriptional corepressor in neuronal cells through recruitment of HDAC3 and HDAC4. Contributes to tumor progression, and tumor cell proliferation and survival. This may be mediated at least in part through repressing transcriptional activity of GADD45GIP1. Required for recruiting the proteasome from the nucleus to the cytoplasm and dendritic spines. Involved in the acute behavioral and neurological responses to cocaine and amphetamines. The sequence is that of Nucleus accumbens-associated protein 1 (Nacc1) from Mus musculus (Mouse).